The sequence spans 1001 residues: E3 ubiquitin-protein ligase BRE1B (1001 aa).

Residues Met1 to Thr31 form a disordered region. Basic and acidic residues predominate over residues Pro18 to Thr28. Lys20 carries the post-translational modification N6-acetyllysine. Phosphoserine is present on Ser42. A coiled-coil region spans residues Glu45–Leu91. Residues Gly116–Pro149 form a disordered region. 2 coiled-coil regions span residues Ala228–Leu377 and Leu437–Ser523. 2 positions are modified to N6-acetyllysine: Lys355 and Lys517. The segment at Gly516–Arg646 is disordered. The span at Ala520–Asn531 shows a compositional bias: polar residues. Phosphoserine is present on Ser528. Glycyl lysine isopeptide (Lys-Gly) (interchain with G-Cter in SUMO2) cross-links involve residues Lys578 and Lys579. The residue at position 585 (Ser585) is a Phosphoserine. Composition is skewed to basic and acidic residues over residues Arg602–Gly619 and Arg633–Arg646. The stretch at Val627 to Leu946 forms a coiled coil. An RING-type zinc finger spans residues Cys948–Asn987.

Belongs to the BRE1 family. Component of the RNF20/40 complex (also known as BRE1 complex) probably composed of 2 copies of RNF20/BRE1A and 2 copies of RNF40/BRE1B. Interacts with UBE2E1/UBCH6. Interacts with RB1 and WAC.

Its subcellular location is the nucleus. The catalysed reaction is S-ubiquitinyl-[E2 ubiquitin-conjugating enzyme]-L-cysteine + [acceptor protein]-L-lysine = [E2 ubiquitin-conjugating enzyme]-L-cysteine + N(6)-ubiquitinyl-[acceptor protein]-L-lysine.. The protein operates within protein modification; protein ubiquitination. Its function is as follows. Component of the RNF20/40 E3 ubiquitin-protein ligase complex that mediates monoubiquitination of 'Lys-120' of histone H2B (H2BK120ub1). H2BK120ub1 gives a specific tag for epigenetic transcriptional activation and is also prerequisite for histone H3 'Lys-4' and 'Lys-79' methylation (H3K4me and H3K79me, respectively). It thereby plays a central role in histone code and gene regulation. The RNF20/40 complex forms a H2B ubiquitin ligase complex in cooperation with the E2 enzyme UBE2A or UBE2B; reports about the cooperation with UBE2E1/UBCH are contradictory. Required for transcriptional activation of Hox genes. In Macaca fascicularis (Crab-eating macaque), this protein is E3 ubiquitin-protein ligase BRE1B (RNF40).